The chain runs to 174 residues: Cytochrome c-type biogenesis protein CcmE (174 aa).

Residues 1–8 (MNPRRKSR) are Cytoplasmic-facing. Residues 9–29 (LSVVLFILLGISVASALVLYA) traverse the membrane as a helical; Signal-anchor for type II membrane protein segment. Residues 30–174 (LRQNIDLFYT…QEKQFKEGNQ (145 aa)) are Periplasmic-facing. Heme contacts are provided by H131 and Y135. Residues 149–174 (KPMGISDLKNESDRDRQEKQFKEGNQ) are disordered. The span at 156-174 (LKNESDRDRQEKQFKEGNQ) shows a compositional bias: basic and acidic residues.

Belongs to the CcmE/CycJ family.

It localises to the cell inner membrane. Its function is as follows. Heme chaperone required for the biogenesis of c-type cytochromes. Transiently binds heme delivered by CcmC and transfers the heme to apo-cytochromes in a process facilitated by CcmF and CcmH. The polypeptide is Cytochrome c-type biogenesis protein CcmE (Histophilus somni (strain 2336) (Haemophilus somnus)).